A 267-amino-acid chain; its full sequence is Glucosamine-6-phosphate deaminase (267 aa).

Asp-76 serves as the catalytic Proton acceptor; for enolization step. The active-site For ring-opening step is the Asp-145. The active-site Proton acceptor; for ring-opening step is the His-147. The active-site For ring-opening step is the Glu-152.

The protein belongs to the glucosamine/galactosamine-6-phosphate isomerase family. As to quaternary structure, homohexamer.

Its subcellular location is the cytoplasm. It catalyses the reaction alpha-D-glucosamine 6-phosphate + H2O = beta-D-fructose 6-phosphate + NH4(+). It participates in nucleotide-sugar biosynthesis; UDP-N-acetyl-alpha-D-glucosamine biosynthesis; alpha-D-glucosamine 6-phosphate from D-fructose 6-phosphate: step 1/1. Its function is as follows. Catalyzes the reversible conversion of alpha-D-glucosamine 6-phosphate (GlcN-6P) into beta-D-fructose 6-phosphate (Fru-6P) and ammonium ion, a regulatory reaction step in de novo uridine diphosphate-N-acetyl-alpha-D-glucosamine (UDP-GlcNAc) biosynthesis via hexosamine pathway. This is Glucosamine-6-phosphate deaminase from Dictyostelium discoideum (Social amoeba).